Consider the following 146-residue polypeptide: Leghemoglobin (146 aa).

One can recognise a Globin domain in the interval 3–146 (AFTEKQEALV…FAAGIKKAYA (144 aa)). 2 positions are modified to nitrated tyrosine: tyrosine 26 and tyrosine 31. Residue serine 46 coordinates heme b. At serine 46 the chain carries Phosphoserine. An O2-binding site is contributed by histidine 62. Residues histidine 93 and lysine 96 each contribute to the heme b site. A Nitrated tyrosine modification is found at tyrosine 134.

The protein belongs to the plant globin family. As to quaternary structure, monomer. Post-translationally, nitrated mainly at Tyr-31 and, to a lower extent, at Tyr-26 and Tyr-134, in effective nodules and particularly in hypoxic conditions; this mechanism may play a protective role in the symbiosis by buffering toxic peroxynitrite NO(2)(-). Nitration level decrease during nodule senescence. Phosphorylation at Ser-46 disrupts the molecular environment of its porphyrin ring oxygen binding pocket, thus leading to a reduced oxygen consumption and to the delivery of oxygen O(2) to symbiosomes. In terms of tissue distribution, root nodules.

The protein resides in the cytoplasm. It localises to the cytosol. It is found in the nucleus. Leghemoglobin that reversibly binds oxygen O(2) through a pentacoordinated heme iron. In root nodules, facilitates the diffusion of oxygen to the bacteroids while preventing the bacterial nitrogenase from being inactivated by buffering dioxygen, nitric oxide and carbon monoxide, and promoting the formation of reactive oxygen species (ROS, e.g. H(2)O(2)). This role is essential for symbiotic nitrogen fixation (SNF). This Phaseolus vulgaris (Kidney bean) protein is Leghemoglobin.